The sequence spans 316 residues: Probable cell division protein WhiA (316 aa).

The H-T-H motif DNA-binding region spans 276-309 (SLEELGKIAEPQITKDAIAGRIRRLLQLAEKTEK).

Belongs to the WhiA family.

Functionally, involved in cell division and chromosome segregation. The chain is Probable cell division protein WhiA from Bifidobacterium longum (strain NCC 2705).